Consider the following 3672-residue polypeptide: Laminin-like protein epi-1 (3672 aa).

Positions 1–27 (MSPYDSSPWATKALFLIVTLLAQFTYS) are cleaved as a signal peptide. The 270-residue stretch at 28-297 (QVLTPSQITI…AIKEIMIGGR (270 aa)) folds into the Laminin N-terminal domain. Residues asparagine 121, asparagine 140, and asparagine 249 are each glycosylated (N-linked (GlcNAc...) asparagine). Cystine bridges form between cysteine 298–cysteine 307, cysteine 300–cysteine 320, cysteine 322–cysteine 331, cysteine 334–cysteine 354, cysteine 357–cysteine 366, cysteine 359–cysteine 391, cysteine 394–cysteine 403, cysteine 406–cysteine 424, cysteine 427–cysteine 438, cysteine 429–cysteine 445, cysteine 447–cysteine 456, cysteine 459–cysteine 469, cysteine 472–cysteine 484, cysteine 474–cysteine 491, cysteine 493–cysteine 502, cysteine 505–cysteine 516, cysteine 519–cysteine 531, cysteine 521–cysteine 538, cysteine 540–cysteine 549, cysteine 552–cysteine 561, cysteine 564–cysteine 576, cysteine 566–cysteine 583, cysteine 585–cysteine 594, cysteine 597–cysteine 607, cysteine 610–cysteine 622, cysteine 612–cysteine 629, cysteine 631–cysteine 640, cysteine 643–cysteine 653, cysteine 656–cysteine 668, cysteine 658–cysteine 674, cysteine 676–cysteine 685, cysteine 688–cysteine 698, cysteine 701–cysteine 715, cysteine 703–cysteine 724, cysteine 726–cysteine 735, cysteine 738–cysteine 753, cysteine 756–cysteine 770, cysteine 758–cysteine 777, cysteine 779–cysteine 788, cysteine 791–cysteine 806, cysteine 809–cysteine 821, cysteine 811–cysteine 828, and cysteine 830–cysteine 839. 10 consecutive Laminin EGF-like domains span residues 298–356 (CVCN…TCEA), 357–426 (CNCF…PCKV), 427–471 (CDCD…KCKP), 472–518 (CECN…GCVE), 519–563 (CVCD…DCKF), 564–609 (CNCD…NCKA), 610–655 (CACD…DCRG), 656–700 (CECL…ICEE), 701–755 (CNCN…GCRS), and 756–808 (CDCN…GCES). An N-linked (GlcNAc...) asparagine glycan is attached at asparagine 351. Residue asparagine 477 is glycosylated (N-linked (GlcNAc...) asparagine). Asparagine 511 and asparagine 530 each carry an N-linked (GlcNAc...) asparagine glycan. Asparagine 634 is a glycosylation site (N-linked (GlcNAc...) asparagine). Asparagine 761 carries N-linked (GlcNAc...) asparagine glycosylation. Residues 809 to 839 (CHCDIGGALRAECDITSGQCKCRPRVTGLRC) enclose the Laminin EGF-like 11; truncated domain. Residues asparagine 1014 and asparagine 1341 are each glycosylated (N-linked (GlcNAc...) asparagine). Cystine bridges form between cysteine 1415-cysteine 1427, cysteine 1417-cysteine 1434, cysteine 1436-cysteine 1445, cysteine 1448-cysteine 1458, cysteine 1461-cysteine 1469, cysteine 1463-cysteine 1476, cysteine 1478-cysteine 1487, cysteine 1490-cysteine 1503, cysteine 1506-cysteine 1520, cysteine 1508-cysteine 1527, cysteine 1529-cysteine 1538, cysteine 1541-cysteine 1551, cysteine 1554-cysteine 1566, cysteine 1556-cysteine 1573, cysteine 1575-cysteine 1584, and cysteine 1587-cysteine 1602. 4 consecutive Laminin EGF-like domains span residues 1415–1460 (CDCV…ECIK), 1461–1505 (CQCN…GCQK), 1506–1553 (CGCH…HCYG), and 1554–1604 (CSCN…GCVN). In terms of domain architecture, Laminin EGF-like 16; first part spans 1605–1614 (CFCFGVTDSC). One can recognise a Laminin IV type A domain in the interval 1615-1796 (RSSMYPVTIM…SVIKASSVEQ (182 aa)). 2 N-linked (GlcNAc...) asparagine glycosylation sites follow: asparagine 1705 and asparagine 1756. In terms of domain architecture, Laminin EGF-like 16; second part spans 1797-1829 (CQCPAPYTGPSCQLCASGYHRVQSGSFLGACVP). Disulfide bonds link cysteine 1830/cysteine 1839, cysteine 1832/cysteine 1846, cysteine 1849/cysteine 1858, cysteine 1861/cysteine 1877, cysteine 1880/cysteine 1894, cysteine 1882/cysteine 1905, cysteine 1907/cysteine 1916, cysteine 1919/cysteine 1934, cysteine 1937/cysteine 1951, cysteine 1939/cysteine 1958, cysteine 1961/cysteine 1970, cysteine 1973/cysteine 1987, cysteine 1990/cysteine 2000, cysteine 1992/cysteine 2007, cysteine 2009/cysteine 2018, cysteine 2021/cysteine 2031, cysteine 2037/cysteine 2048, cysteine 2039/cysteine 2055, cysteine 2057/cysteine 2066, cysteine 2069/cysteine 2081, cysteine 2084/cysteine 2096, cysteine 2086/cysteine 2103, cysteine 2105/cysteine 2114, and cysteine 2117/cysteine 2129. Laminin EGF-like domains follow at residues 1830–1879 (CECN…DCMA), 1880–1936 (CACP…SCSP), 1937–1989 (CQCN…NCSS), 1990–2036 (CECS…GCQG), 2037–2083 (CHCG…GCDK), and 2084–2131 (CDCE…GCRR). Asparagine 1868 carries N-linked (GlcNAc...) asparagine glycosylation. Asparagine 1944 is a glycosylation site (N-linked (GlcNAc...) asparagine). Residue asparagine 1986 is glycosylated (N-linked (GlcNAc...) asparagine). Residue asparagine 2002 is glycosylated (N-linked (GlcNAc...) asparagine). N-linked (GlcNAc...) asparagine glycans are attached at residues asparagine 2159, asparagine 2207, asparagine 2231, asparagine 2235, asparagine 2401, asparagine 2421, asparagine 2487, and asparagine 2821. Laminin G-like domains follow at residues 2693–2884 (GAHF…VNGA), 2896–3066 (ELVV…RSGC), and 3072–3235 (RTVS…LNGC). A disulfide bridge connects residues cysteine 3040 and cysteine 3066. Residue asparagine 3087 is glycosylated (N-linked (GlcNAc...) asparagine). A disulfide bridge links cysteine 3209 with cysteine 3235. A disordered region spans residues 3236–3294 (SLSDDENISTTTTAAPKPTDDSDVAVLPIDEEEESTTTTTTTTTEEPTEEPAEARPDGH). Residue asparagine 3242 is glycosylated (N-linked (GlcNAc...) asparagine). Low complexity predominate over residues 3271–3280 (TTTTTTTTTE). 2 consecutive Laminin G-like domains span residues 3310 to 3482 (GFNF…TEQC) and 3488 to 3669 (PGMY…RNAC). Cysteine 3460 and cysteine 3482 form a disulfide bridge. Asparagine 3541 is a glycosylation site (N-linked (GlcNAc...) asparagine). Cysteine 3633 and cysteine 3669 form a disulfide bridge.

In terms of assembly, laminin is a complex glycoprotein, consisting of three different polypeptide chains (alpha, beta, gamma), which are bound to each other by disulfide bonds into a cross-shaped molecule comprising one long and three short arms with globules at each end.

The protein localises to the secreted. Its subcellular location is the extracellular space. It localises to the extracellular matrix. It is found in the basement membrane. In terms of biological role, binding to cells via a high affinity receptor, laminin is thought to mediate the attachment, migration and organization of cells into tissues during embryonic development by interacting with other extracellular matrix components. Required to assemble a stable basement membrane and for organizing receptor complexes and cytoskeletal components to the proper cell surfaces. During embryogenesis, does not require the presence of collagen type IV in order to associate with cell surfaces, prior to assembly of the prototypical basement membrane. During the formation of neuromuscular junctions at the larval stage, negatively regulates membrane protrusion from body wall muscles, probably downstream of the integrin complex formed by pat-2 and pat-3. Probably plays a distinct role from the related laminin subunit alpha lam-3. This chain is Laminin-like protein epi-1 (epi-1), found in Caenorhabditis elegans.